The sequence spans 197 residues: Recombination protein RecR (197 aa).

The segment at 56–71 (CKRCGSYAETEICNIC) adopts a C4-type zinc-finger fold. The Toprim domain occupies 79 to 174 (HTFCVVEQPE…DVTRIAYGIT (96 aa)).

It belongs to the RecR family.

May play a role in DNA repair. It seems to be involved in an RecBC-independent recombinational process of DNA repair. It may act with RecF and RecO. The polypeptide is Recombination protein RecR (Leptospira borgpetersenii serovar Hardjo-bovis (strain JB197)).